Consider the following 311-residue polypeptide: Malate dehydrogenase (311 aa).

NAD(+) is bound by residues Gly-7 to Gly-13 and Asp-34. Positions 81 and 87 each coordinate substrate. Residues Asn-94 and Ile-117–Asn-119 each bind NAD(+). Substrate is bound by residues Asn-119 and Arg-153. The active-site Proton acceptor is the His-177. Residue Met-227 coordinates NAD(+).

It belongs to the LDH/MDH superfamily. MDH type 1 family. Homodimer.

It catalyses the reaction (S)-malate + NAD(+) = oxaloacetate + NADH + H(+). Functionally, catalyzes the reversible oxidation of malate to oxaloacetate. This is Malate dehydrogenase from Shewanella baltica (strain OS155 / ATCC BAA-1091).